A 264-amino-acid polypeptide reads, in one-letter code: 3-methyl-2-oxobutanoate hydroxymethyltransferase (264 aa).

The Mg(2+) site is built by aspartate 45 and aspartate 84. Residues 45–46, aspartate 84, and lysine 112 contribute to the 3-methyl-2-oxobutanoate site; that span reads DS. A Mg(2+)-binding site is contributed by glutamate 114. The Proton acceptor role is filled by glutamate 181.

Belongs to the PanB family. In terms of assembly, homodecamer; pentamer of dimers. Mg(2+) serves as cofactor.

It is found in the cytoplasm. It carries out the reaction 3-methyl-2-oxobutanoate + (6R)-5,10-methylene-5,6,7,8-tetrahydrofolate + H2O = 2-dehydropantoate + (6S)-5,6,7,8-tetrahydrofolate. It participates in cofactor biosynthesis; (R)-pantothenate biosynthesis; (R)-pantoate from 3-methyl-2-oxobutanoate: step 1/2. In terms of biological role, catalyzes the reversible reaction in which hydroxymethyl group from 5,10-methylenetetrahydrofolate is transferred onto alpha-ketoisovalerate to form ketopantoate. The sequence is that of 3-methyl-2-oxobutanoate hydroxymethyltransferase from Vibrio parahaemolyticus serotype O3:K6 (strain RIMD 2210633).